The sequence spans 615 residues: Medium-chain acyl-CoA ligase ACSF2, mitochondrial (615 aa).

A mitochondrion-targeting transit peptide spans 1-41; that stretch reads MAVYHGMLRFGRLCIASLGARGPRTLLSRPRPNSKLQSVRA. Lysine 179 carries the N6-acetyllysine modification. Lysine 182 is subject to N6-acetyllysine; alternate. Lysine 182 is modified (N6-succinyllysine; alternate). Lysine 199 is modified (N6-acetyllysine). 263 to 271 serves as a coordination point for ATP; that stretch reads TSGTTGNPK. Lysine 340 and lysine 398 each carry N6-acetyllysine. Residue lysine 478 is modified to N6-succinyllysine. 2 residues coordinate ATP: aspartate 493 and arginine 508. N6-acetyllysine is present on lysine 510. 2 positions are modified to N6-acetyllysine; alternate: lysine 544 and lysine 570. N6-succinyllysine; alternate is present on residues lysine 544 and lysine 570. Lysine 599 is an ATP binding site. An N6-succinyllysine modification is found at lysine 599.

Belongs to the ATP-dependent AMP-binding enzyme family.

Its subcellular location is the mitochondrion. It carries out the reaction a medium-chain fatty acid + ATP + CoA = a medium-chain fatty acyl-CoA + AMP + diphosphate. The enzyme catalyses octanoate + ATP + CoA = octanoyl-CoA + AMP + diphosphate. In terms of biological role, acyl-CoA synthases catalyze the initial reaction in fatty acid metabolism, by forming a thioester with CoA. Has some preference toward medium-chain substrates. Plays a role in adipocyte differentiation. In Mus musculus (Mouse), this protein is Medium-chain acyl-CoA ligase ACSF2, mitochondrial.